The following is a 219-amino-acid chain: Adenylate kinase (219 aa).

An ATP-binding site is contributed by 10-15 (GAGKGT). Residues 30–59 (STGDMLRAAVKAGTPLGQQAKKIMDEGGLV) form an NMP region. AMP contacts are provided by residues threonine 31, arginine 36, 57-59 (GLV), 85-88 (GFPR), and glutamine 92. The segment at 122-159 (GRRVHPGSGRVYHVTHNPPRQEGKDDVTGEDLVQREDD) is LID. Residues arginine 123 and 132–133 (VY) each bind ATP. Residues 128–150 (GSGRVYHVTHNPPRQEGKDDVTG) are disordered. Over residues 140–150 (PRQEGKDDVTG) the composition is skewed to basic and acidic residues. Residues arginine 156 and arginine 167 each contribute to the AMP site. Arginine 203 is a binding site for ATP.

Belongs to the adenylate kinase family. Monomer.

It localises to the cytoplasm. It catalyses the reaction AMP + ATP = 2 ADP. The protein operates within purine metabolism; AMP biosynthesis via salvage pathway; AMP from ADP: step 1/1. Its function is as follows. Catalyzes the reversible transfer of the terminal phosphate group between ATP and AMP. Plays an important role in cellular energy homeostasis and in adenine nucleotide metabolism. This Halorhodospira halophila (strain DSM 244 / SL1) (Ectothiorhodospira halophila (strain DSM 244 / SL1)) protein is Adenylate kinase.